The sequence spans 150 residues: Putative pre-16S rRNA nuclease (150 aa).

Belongs to the YqgF nuclease family.

Its subcellular location is the cytoplasm. Its function is as follows. Could be a nuclease involved in processing of the 5'-end of pre-16S rRNA. In Protochlamydia amoebophila (strain UWE25), this protein is Putative pre-16S rRNA nuclease.